The following is a 240-amino-acid chain: Putative protein FAM10A4 (240 aa).

Positions 38 to 94 are disordered; sequence MGGTATQKAKSEENTKEEKPDSKVEEDLKADEPSSEESDLEIDKEGVIEPDTDAPQE. Basic and acidic residues predominate over residues 46 to 69; the sequence is AKSEENTKEEKPDSKVEEDLKADE. Residues 85 to 94 show a composition bias toward acidic residues; sequence IEPDTDAPQE. TPR repeat units lie at residues 110–143, 145–177, and 179–211; these read ANDKKVAAIEALNDGELQKAIDLFTDAIKLNPRL, ILYAKRASVFVKLQKPNAAIRDCDRAIEINPDS, and QPYKRRGKAHRLLGHWEEAAHDLALACKFDYDE. The tract at residues 220-240 is disordered; sequence VQPRAQKIAEHQRKYERKREE. The span at 226–240 shows a compositional bias: basic and acidic residues; the sequence is KIAEHQRKYERKREE.

It belongs to the FAM10 family. Highly expressed in bone marrow and weakly in placenta, pancreas, heart and HeLa cell line.

The protein resides in the cytoplasm. In Homo sapiens (Human), this protein is Putative protein FAM10A4 (ST13P4).